Here is a 1275-residue protein sequence, read N- to C-terminus: Rho1 guanine nucleotide exchange factor 3 (1275 aa).

4 disordered regions span residues Met1–Lys42, Ser56–Ala113, Asn131–Ser188, and Leu214–Leu248. Residues Leu7–Gly17 show a composition bias toward basic and acidic residues. 3 stretches are compositionally biased toward polar residues: residues Pro32–Lys42, Ala80–Ala113, and Ser142–Asp151. 2 stretches are compositionally biased toward low complexity: residues Ser178–Ser188 and Leu214–Arg228. At Ser293 the chain carries Phosphoserine. Positions Ala465–Val657 constitute a DH domain. The 164-residue stretch at Glu692–Lys855 folds into the PH domain. The CNH domain occupies Tyr930–Leu1239.

It is found in the cytoplasm. Functionally, stimulates the exchange of Rho1 GDP-bound form into GTP-bound form. Regulates, via interaction and activation of Rho1, beta-1,3-glucan biosynthesis and cell wall integrity during septation. Involved in the regulation of contractile ring assembly. This is Rho1 guanine nucleotide exchange factor 3 (rgf3) from Schizosaccharomyces pombe (strain 972 / ATCC 24843) (Fission yeast).